The sequence spans 299 residues: Zinc import ATP-binding protein ZnuC (299 aa).

Positions 13 to 228 (VSLANAGVQR…PEYMRLFGGT (216 aa)) constitute an ABC transporter domain. 45 to 52 (GPNGSGKS) contacts ATP.

It belongs to the ABC transporter superfamily. Zinc importer (TC 3.A.1.15.5) family. The complex is composed of two ATP-binding proteins (ZnuC), two transmembrane proteins (ZnuB) and a solute-binding protein (ZnuA).

The protein resides in the cell inner membrane. The catalysed reaction is Zn(2+)(out) + ATP(in) + H2O(in) = Zn(2+)(in) + ADP(in) + phosphate(in) + H(+)(in). Part of the ABC transporter complex ZnuABC involved in zinc import. Responsible for energy coupling to the transport system. In Agrobacterium fabrum (strain C58 / ATCC 33970) (Agrobacterium tumefaciens (strain C58)), this protein is Zinc import ATP-binding protein ZnuC.